The sequence spans 231 residues: Deoxyribose-phosphate aldolase (231 aa).

The Proton donor/acceptor role is filled by Asp86. The active-site Schiff-base intermediate with acetaldehyde is the Lys147. The Proton donor/acceptor role is filled by Lys172. A disordered region spans residues 206–231; that stretch reads WQAETAGETVTEPESDRDGADTTDGY.

Belongs to the DeoC/FbaB aldolase family. DeoC type 1 subfamily.

It localises to the cytoplasm. It carries out the reaction 2-deoxy-D-ribose 5-phosphate = D-glyceraldehyde 3-phosphate + acetaldehyde. Its pathway is carbohydrate degradation; 2-deoxy-D-ribose 1-phosphate degradation; D-glyceraldehyde 3-phosphate and acetaldehyde from 2-deoxy-alpha-D-ribose 1-phosphate: step 2/2. Catalyzes a reversible aldol reaction between acetaldehyde and D-glyceraldehyde 3-phosphate to generate 2-deoxy-D-ribose 5-phosphate. The polypeptide is Deoxyribose-phosphate aldolase (Haloarcula marismortui (strain ATCC 43049 / DSM 3752 / JCM 8966 / VKM B-1809) (Halobacterium marismortui)).